Reading from the N-terminus, the 186-residue chain is ATP synthase subunit delta (186 aa).

It belongs to the ATPase delta chain family. As to quaternary structure, F-type ATPases have 2 components, F(1) - the catalytic core - and F(0) - the membrane proton channel. F(1) has five subunits: alpha(3), beta(3), gamma(1), delta(1), epsilon(1). F(0) has three main subunits: a(1), b(2) and c(10-14). The alpha and beta chains form an alternating ring which encloses part of the gamma chain. F(1) is attached to F(0) by a central stalk formed by the gamma and epsilon chains, while a peripheral stalk is formed by the delta and b chains.

It is found in the cell inner membrane. Functionally, f(1)F(0) ATP synthase produces ATP from ADP in the presence of a proton or sodium gradient. F-type ATPases consist of two structural domains, F(1) containing the extramembraneous catalytic core and F(0) containing the membrane proton channel, linked together by a central stalk and a peripheral stalk. During catalysis, ATP synthesis in the catalytic domain of F(1) is coupled via a rotary mechanism of the central stalk subunits to proton translocation. This protein is part of the stalk that links CF(0) to CF(1). It either transmits conformational changes from CF(0) to CF(1) or is implicated in proton conduction. In Mesorhizobium japonicum (strain LMG 29417 / CECT 9101 / MAFF 303099) (Mesorhizobium loti (strain MAFF 303099)), this protein is ATP synthase subunit delta.